Consider the following 240-residue polypeptide: Proteasome subunit beta type-1 (240 aa).

An N-acetylmethionine modification is found at Met1. The propeptide occupies 1–27 (MLSTAAYRDPDRELVMGPQGSAGPVQM). O-linked (GlcNAc) serine glycosylation occurs at Ser57. Phosphoserine occurs at positions 61 and 67. Position 149 is a phosphotyrosine (Tyr149). Ser161 carries the post-translational modification Phosphoserine. Lys203 bears the N6-acetyllysine mark. O-linked (GlcNAc) serine glycosylation occurs at Ser208.

It belongs to the peptidase T1B family. In terms of assembly, the 26S proteasome consists of a 20S proteasome core and two 19S regulatory subunits. The 20S proteasome core is a barrel-shaped complex made of 28 subunits that are arranged in four stacked rings. The two outer rings are each formed by seven alpha subunits, and the two inner rings are formed by seven beta subunits. The proteolytic activity is exerted by three beta-subunits PSMB5, PSMB6 and PSMB7. Interacts with SERPINB2. Interacts with RFPL4A. Ubiquitous.

Its subcellular location is the cytoplasm. It localises to the nucleus. Non-catalytic component of the 20S core proteasome complex involved in the proteolytic degradation of most intracellular proteins. This complex plays numerous essential roles within the cell by associating with different regulatory particles. Associated with two 19S regulatory particles, forms the 26S proteasome and thus participates in the ATP-dependent degradation of ubiquitinated proteins. The 26S proteasome plays a key role in the maintenance of protein homeostasis by removing misfolded or damaged proteins that could impair cellular functions, and by removing proteins whose functions are no longer required. Associated with the PA200 or PA28, the 20S proteasome mediates ubiquitin-independent protein degradation. This type of proteolysis is required in several pathways including spermatogenesis (20S-PA200 complex) or generation of a subset of MHC class I-presented antigenic peptides (20S-PA28 complex). The polypeptide is Proteasome subunit beta type-1 (Psmb1) (Rattus norvegicus (Rat)).